The chain runs to 329 residues: GTPase Obg (329 aa).

The Obg domain occupies 1 to 159; that stretch reads MQFIDQARIT…WFLQLELKLL (159 aa). An OBG-type G domain is found at 160 to 328; the sequence is AEVGIIGLPN…LLAQVWKELG (169 aa). ATP-binding positions include 166–173, 191–195, 213–216, 280–283, and 309–311; these read GLPNAGKS, FTTLV, DIPG, NKQE, and SAA. S173 and T193 together coordinate Mg(2+).

It belongs to the TRAFAC class OBG-HflX-like GTPase superfamily. OBG GTPase family. As to quaternary structure, monomer. It depends on Mg(2+) as a cofactor.

It is found in the cytoplasm. An essential GTPase which binds GTP, GDP and possibly (p)ppGpp with moderate affinity, with high nucleotide exchange rates and a fairly low GTP hydrolysis rate. Plays a role in control of the cell cycle, stress response, ribosome biogenesis and in those bacteria that undergo differentiation, in morphogenesis control. This is GTPase Obg from Prochlorococcus marinus (strain MIT 9303).